We begin with the raw amino-acid sequence, 52 residues long: Large ribosomal subunit protein bL33 (52 aa).

The protein belongs to the bacterial ribosomal protein bL33 family.

The sequence is that of Large ribosomal subunit protein bL33 from Chlamydia abortus (strain DSM 27085 / S26/3) (Chlamydophila abortus).